Consider the following 398-residue polypeptide: Phytoene synthase 2, chloroplastic (398 aa).

Residues 1-80 (MASSSSAAAL…EEAVYEVVLR (80 aa)) constitute a chloroplast transit peptide.

It belongs to the phytoene/squalene synthase family. In terms of tissue distribution, expressed in leaves and endosperm. Expressed in developing leaves.

It is found in the plastid. The protein resides in the chloroplast membrane. It localises to the chloroplast. Its subcellular location is the plastoglobule. The enzyme catalyses 2 (2E,6E,10E)-geranylgeranyl diphosphate = 15-cis-phytoene + 2 diphosphate. In terms of biological role, catalyzes the conversion of geranylgeranyl diphosphate to phytoene. Mediates the first committed step in carotenoid biosynthesis. This is Phytoene synthase 2, chloroplastic from Oryza sativa subsp. japonica (Rice).